Consider the following 642-residue polypeptide: Threonine--tRNA ligase (642 aa).

The 61-residue stretch at 1–61 folds into the TGS domain; that stretch reads MPVITLPDGS…ETDVDLAIIT (61 aa). A catalytic region spans residues 243 to 534; the sequence is DHRKIGKQLD…LIEEYAGKFP (292 aa). Cys-334, His-385, and His-511 together coordinate Zn(2+).

Belongs to the class-II aminoacyl-tRNA synthetase family. Homodimer. Zn(2+) serves as cofactor.

It localises to the cytoplasm. The catalysed reaction is tRNA(Thr) + L-threonine + ATP = L-threonyl-tRNA(Thr) + AMP + diphosphate + H(+). Catalyzes the attachment of threonine to tRNA(Thr) in a two-step reaction: L-threonine is first activated by ATP to form Thr-AMP and then transferred to the acceptor end of tRNA(Thr). Also edits incorrectly charged L-seryl-tRNA(Thr). In Shewanella loihica (strain ATCC BAA-1088 / PV-4), this protein is Threonine--tRNA ligase.